Reading from the N-terminus, the 223-residue chain is Small ribosomal subunit protein uS3 (223 aa).

Residues 39–107 form the KH type-2 domain; that stretch reads VREFLHKKLA…PVQINIEEVR (69 aa).

This sequence belongs to the universal ribosomal protein uS3 family. Part of the 30S ribosomal subunit. Forms a tight complex with proteins S10 and S14.

Its function is as follows. Binds the lower part of the 30S subunit head. Binds mRNA in the 70S ribosome, positioning it for translation. The polypeptide is Small ribosomal subunit protein uS3 (Francisella tularensis subsp. mediasiatica (strain FSC147)).